Consider the following 352-residue polypeptide: Rhodopsin (352 aa).

At 1–36 (MNGTEGPFFYIPMVNTTGVVRSPYEYPQYYLVNPAA) the chain is on the extracellular side. 2 N-linked (GlcNAc...) asparagine glycosylation sites follow: Asn-2 and Asn-15. A helical transmembrane segment spans residues 37–61 (YACLGAYMFFLILVGFPVNFLTLYV). The Cytoplasmic portion of the chain corresponds to 62–73 (TLEHKKLRTPLN). Residues 74–96 (YILLNLAVADLFMVFGGFTTTIY) traverse the membrane as a helical segment. Residues 97–110 (TSMHGYFVLGRLGC) are Extracellular-facing. Cys-110 and Cys-187 are disulfide-bonded. A helical transmembrane segment spans residues 111–133 (NIEGFFATLGGEIALWSLVVLAI). The 'Ionic lock' involved in activated form stabilization motif lies at 134–136 (ERW). Over 134–152 (ERWVVVCKPISNFRFGENH) the chain is Cytoplasmic. The chain crosses the membrane as a helical span at residues 153–173 (AIMGVAFTWFMASACAVPPLV). Topologically, residues 174 to 202 (GWSRYIPEGMQCSCGIDYYTRAEGFNNES) are extracellular. An N-linked (GlcNAc...) asparagine glycan is attached at Asn-200. The helical transmembrane segment at 203-224 (FVIYMFTVHFCIPLAVVGFCYG) threads the bilayer. At 225–252 (RLLCAVKEAAAAQQESETTQRAEREVSR) the chain is on the cytoplasmic side. A helical transmembrane segment spans residues 253–274 (MVVIMVIGFLVCWLPYASVAWY). The Extracellular segment spans residues 275–286 (IFTHQGSEFGPL). A helical membrane pass occupies residues 287–308 (FMTIPAFFAKSSSIYNPMIYIC). The residue at position 296 (Lys-296) is an N6-(retinylidene)lysine. The Cytoplasmic portion of the chain corresponds to 309–352 (MNKQFRHCMITTLCCGKNPFEEEEGASTTKTEASSVSSSSVSPA). 2 S-palmitoyl cysteine lipidation sites follow: Cys-322 and Cys-323. Residues 331-352 (EEGASTTKTEASSVSSSSVSPA) are disordered. Residues 342 to 352 (SSVSSSSVSPA) are compositionally biased toward low complexity.

It belongs to the G-protein coupled receptor 1 family. Opsin subfamily. In terms of processing, phosphorylated on some or all of the serine and threonine residues present in the C-terminal region. Contains one covalently linked retinal chromophore.

It localises to the membrane. The protein localises to the cell projection. It is found in the cilium. The protein resides in the photoreceptor outer segment. In terms of biological role, photoreceptor required for image-forming vision at low light intensity. While most salt water fish species use retinal as chromophore, most freshwater fish use 3-dehydroretinal, or a mixture of retinal and 3-dehydroretinal. Light-induced isomerization of 11-cis to all-trans retinal triggers a conformational change that activates signaling via G-proteins. Subsequent receptor phosphorylation mediates displacement of the bound G-protein alpha subunit by arrestin and terminates signaling. The protein is Rhodopsin (rho) of Gobius niger (Black goby).